The following is a 168-amino-acid chain: Peptide deformylase (168 aa).

2 residues coordinate Fe cation: Cys92 and His134. Residue Glu135 is part of the active site. Residue His138 coordinates Fe cation.

This sequence belongs to the polypeptide deformylase family. Requires Fe(2+) as cofactor.

It carries out the reaction N-terminal N-formyl-L-methionyl-[peptide] + H2O = N-terminal L-methionyl-[peptide] + formate. Removes the formyl group from the N-terminal Met of newly synthesized proteins. Requires at least a dipeptide for an efficient rate of reaction. N-terminal L-methionine is a prerequisite for activity but the enzyme has broad specificity at other positions. In Azotobacter vinelandii (strain DJ / ATCC BAA-1303), this protein is Peptide deformylase.